A 1035-amino-acid chain; its full sequence is Sulfite reductase [NADPH] flavoprotein component (1035 aa).

An FAD-binding FR-type domain is found at 648-879 (VKNFVVKVKE…VKPSVMKLPP (232 aa)). Residues 684 to 695 (YDIGEALGIHAR) and 814 to 824 (LKRREYSIASS) contribute to the FAD site.

Requires FAD as cofactor. It depends on FMN as a cofactor.

The enzyme catalyses hydrogen sulfide + 3 NADP(+) + 3 H2O = sulfite + 3 NADPH + 4 H(+). The protein operates within sulfur metabolism; hydrogen sulfide biosynthesis; hydrogen sulfide from sulfite (NADPH route): step 1/1. This enzyme catalyzes the 6-electron reduction of sulfite to sulfide. This is one of several activities required for the biosynthesis of L-cysteine from sulfate. This Saccharomyces cerevisiae (strain ATCC 204508 / S288c) (Baker's yeast) protein is Sulfite reductase [NADPH] flavoprotein component (MET10).